Here is a 304-residue protein sequence, read N- to C-terminus: ATP synthase gamma chain (304 aa).

The protein belongs to the ATPase gamma chain family. As to quaternary structure, F-type ATPases have 2 components, CF(1) - the catalytic core - and CF(0) - the membrane proton channel. CF(1) has five subunits: alpha(3), beta(3), gamma(1), delta(1), epsilon(1). CF(0) has three main subunits: a, b and c.

It is found in the cell membrane. In terms of biological role, produces ATP from ADP in the presence of a proton gradient across the membrane. The gamma chain is believed to be important in regulating ATPase activity and the flow of protons through the CF(0) complex. This chain is ATP synthase gamma chain, found in Thermobifida fusca (strain YX).